Consider the following 900-residue polypeptide: Chromodomain-helicase-DNA-binding protein 1-like (900 aa).

In terms of domain architecture, Helicase ATP-binding spans 52 to 217 (VQCFHCQNGC…YSLLCVVEPD (166 aa)). 65–72 (DEMGLGKT) provides a ligand contact to ATP. Positions 168-171 (DEAH) match the DEAH box motif. The Helicase C-terminal domain maps to 345–507 (LLDRLLAFLY…QKPSAEADFQ (163 aa)). Residue S534 is modified to Phosphoserine. The segment at 546–569 (PDALPAAAAAGGGSLEPEEGSELE) is disordered. The interval 606 to 640 (TLLEKTSHGGRTLRNKGSVLIPGLAEGPIKRKKIL) is regulatory linker segment (RLS). 3 positions are modified to phosphoserine: S612, S623, and S641. The tract at residues 620 to 678 (NKGSVLIPGLAEGPIKRKKILSPEELEDRRKKRQEAAAKRKRLMEEKRKEKEEAEHRKK) is required for ATPase activity. The tract at residues 641–673 (SPEELEDRRKKRQEAAAKRKRLMEEKRKEKEEA) is disordered. Residues 643–680 (EELEDRRKKRQEAAAKRKRLMEEKRKEKEEAEHRKKMA) adopt a coiled-coil conformation. Residues 653–673 (QEAAAKRKRLMEEKRKEKEEA) are compositionally biased toward basic and acidic residues. One can recognise a Macro domain in the interval 709–900 (SAELAYEDLD…ASSSSAPLVP (192 aa)). The residue at position 894 (S894) is a Phosphoserine.

It belongs to the SNF2/RAD54 helicase family. Interacts with nucleosomes; interacts with the acidic patch of histones. Interacts (via macro domain) with PARP1; interacts only when PARP1 is poly-ADP-ribosylated (PARylated). Interacts with CIAO1.

It localises to the nucleus. The protein resides in the chromosome. The catalysed reaction is ATP + H2O = ADP + phosphate + H(+). Adopts an inactive conformation in absence of DNA damage. Binding to poly-ADP-ribosylated histones activates the ATP-dependent chromatin remodeler activity. In terms of biological role, ATP-dependent chromatin remodeler that mediates chromatin-remodeling following DNA damage. Recruited to DNA damage sites through interaction with poly-ADP-ribose: specifically recognizes and binds histones that are poly-ADP-ribosylated on serine residues in response to DNA damage. Poly-ADP-ribose-binding activates the ATP-dependent chromatin remodeler activity, thereby regulating chromatin during DNA repair. Catalyzes nucleosome sliding away from DNA breaks in an ATP-dependent manner. Chromatin remodeling activity promotes PARP2 removal from chromatin. This chain is Chromodomain-helicase-DNA-binding protein 1-like (Chd1l), found in Mus musculus (Mouse).